Reading from the N-terminus, the 256-residue chain is Hydroxyacylglutathione hydrolase (256 aa).

Histidine 53, histidine 55, aspartate 57, histidine 58, histidine 113, aspartate 130, and histidine 168 together coordinate Zn(2+).

This sequence belongs to the metallo-beta-lactamase superfamily. Glyoxalase II family. In terms of assembly, monomer. The cofactor is Zn(2+).

It carries out the reaction an S-(2-hydroxyacyl)glutathione + H2O = a 2-hydroxy carboxylate + glutathione + H(+). Its pathway is secondary metabolite metabolism; methylglyoxal degradation; (R)-lactate from methylglyoxal: step 2/2. Functionally, thiolesterase that catalyzes the hydrolysis of S-D-lactoyl-glutathione to form glutathione and D-lactic acid. In Tolumonas auensis (strain DSM 9187 / NBRC 110442 / TA 4), this protein is Hydroxyacylglutathione hydrolase.